Here is a 549-residue protein sequence, read N- to C-terminus: Protein EPD2 (549 aa).

Positions 1–20 (MISVIKSLLTLSVLSTLAAA) are cleaved as a signal peptide. N-linked (GlcNAc...) asparagine glycosylation is present at N41. An intrachain disulfide couples C82 to C111. Residues N173 and N261 are each glycosylated (N-linked (GlcNAc...) asparagine). Disulfide bonds link C224/C358, C242/C273, C381/C432, C390/C456, and C409/C414. An N-linked (GlcNAc...) asparagine glycan is attached at N467. The disordered stretch occupies residues 470 to 518 (ASTSCSAAGGRGLQSGRRSSTTRGGSSSSRSSSSSSSSSTGSGSSNAGI). Positions 484–514 (SGRRSSTTRGGSSSSRSSSSSSSSSTGSGSS) are enriched in low complexity.

The protein belongs to the glycosyl hydrolase 72 family.

It localises to the cell membrane. This chain is Protein EPD2 (EPD2), found in Candida maltosa (Yeast).